An 855-amino-acid polypeptide reads, in one-letter code: Envelope glycoprotein gp160 (855 aa).

A signal peptide spans 1–31 (MKVKGTRRNYQHLWRWGTLLLGMLMICSATE). At 32–683 (KLWVTVYYGV…ITNWLWYIKI (652 aa)) the chain is on the extracellular side. C53 and C73 are joined by a disulfide. N-linked (GlcNAc...) asparagine; by host glycosylation is found at N87, N129, N140, N154, N158, N184, N190, N200, N233, N244, N265, N279, N292, N298, N304, N334, N341, N358, and N364. Intrachain disulfides connect C118/C208, C125/C199, C130/C155, C221/C250, and C231/C242. The interval 130 to 154 (CTDLGKATNTNSSNWKEEIKGEIKN) is V1. The interval 155-199 (CSFNITTSIRDKIQKENALFRNLDVVPIDNASTTTNYTNYRLIHC) is V2. Residues 299–332 (CTRPNNNTRKSIYIGPGRAFHTTGRIIGDIRKAH) form a V3 region. C299 and C333 are oxidised to a cystine. Residues 366-376 (SSGGDPEIVMH) are CD4-binding loop. 2 disulfides stabilise this stretch: C380-C442 and C387-C415. The tract at residues 387–415 (CNTTQLFNNTWRLNHTEGTKGNDTIILPC) is V4. N-linked (GlcNAc...) asparagine; by host glycosylation is found at N388, N394, N400, N408, N445, N458, and N461. V5 stretches follow at residues 458 to 469 (NVTNDTEVFRPG) and 460 to 469 (TNDTEVFRPG). Residues 510–531 (AVGIVGAMFLGFLGAAGSTMGA) form a fusion peptide region. The tract at residues 573 to 591 (KQLQARVLAVERYLRDQQL) is immunosuppression. C597 and C603 are disulfide-bonded. N610, N615, N624, and N636 each carry an N-linked (GlcNAc...) asparagine; by host glycan. A coiled-coil region spans residues 632–666 (REIDNYTNTIYTLLEESQNQQEKNEQELLELDKWA). Residues 661–682 (ELDKWASLWNWFSITNWLWYIK) are MPER; binding to GalCer. Residues 684–704 (FIMIVGGLVGLRIVFAVLSIV) form a helical membrane-spanning segment. Topologically, residues 705–855 (NRVRQGYSPL…IRQGLERLLL (151 aa)) are cytoplasmic. Positions 711 to 714 (YSPL) match the YXXL motif; contains endocytosis signal motif. A disordered region spans residues 720-739 (LPVPRGPDRPDGIEEEGGER). Residue C763 is the site of S-palmitoyl cysteine; by host attachment. The Di-leucine internalization motif signature appears at 854–855 (LL).

It belongs to the HIV-1 env protein family. The mature envelope protein (Env) consists of a homotrimer of non-covalently associated gp120-gp41 heterodimers. The resulting complex protrudes from the virus surface as a spike. There seems to be as few as 10 spikes on the average virion. Interacts with host CD4, CCR5 and CXCR4. Gp120 also interacts with the C-type lectins CD209/DC-SIGN and CLEC4M/DC-SIGNR (collectively referred to as DC-SIGN(R)). Gp120 and gp41 interact with GalCer. Gp120 interacts with host ITGA4/ITGB7 complex; on CD4+ T-cells, this interaction results in rapid activation of integrin ITGAL/LFA-1, which facilitates efficient cell-to-cell spreading of HIV-1. Gp120 interacts with cell-associated heparan sulfate; this interaction increases virus infectivity on permissive cells and may be involved in infection of CD4- cells. As to quaternary structure, the mature envelope protein (Env) consists of a homotrimer of non-covalently associated gp120-gp41 heterodimers. The resulting complex protrudes from the virus surface as a spike. There seems to be as few as 10 spikes on the average virion. Highly glycosylated by host. The high number of glycan on the protein is reffered to as 'glycan shield' because it contributes to hide protein sequence from adaptive immune system. Post-translationally, palmitoylation of the transmembrane protein and of Env polyprotein (prior to its proteolytic cleavage) is essential for their association with host cell membrane lipid rafts. Palmitoylation is therefore required for envelope trafficking to classical lipid rafts, but not for viral replication. In terms of processing, specific enzymatic cleavages in vivo yield mature proteins. Envelope glycoproteins are synthesized as an inactive precursor that is heavily N-glycosylated and processed likely by host cell furin in the Golgi to yield the mature SU and TM proteins. The cleavage site between SU and TM requires the minimal sequence [KR]-X-[KR]-R. About 2 of the 9 disulfide bonds of gp41 are reduced by P4HB/PDI, following binding to CD4 receptor.

It is found in the virion membrane. It localises to the host cell membrane. Its subcellular location is the host endosome membrane. In terms of biological role, oligomerizes in the host endoplasmic reticulum into predominantly trimers. In a second time, gp160 transits in the host Golgi, where glycosylation is completed. The precursor is then proteolytically cleaved in the trans-Golgi and thereby activated by cellular furin or furin-like proteases to produce gp120 and gp41. Its function is as follows. Attaches the virus to the host lymphoid cell by binding to the primary receptor CD4. This interaction induces a structural rearrangement creating a high affinity binding site for a chemokine coreceptor like CXCR4 and/or CCR5. Acts as a ligand for CD209/DC-SIGN and CLEC4M/DC-SIGNR, which are respectively found on dendritic cells (DCs), and on endothelial cells of liver sinusoids and lymph node sinuses. These interactions allow capture of viral particles at mucosal surfaces by these cells and subsequent transmission to permissive cells. HIV subverts the migration properties of dendritic cells to gain access to CD4+ T-cells in lymph nodes. Virus transmission to permissive T-cells occurs either in trans (without DCs infection, through viral capture and transmission), or in cis (following DCs productive infection, through the usual CD4-gp120 interaction), thereby inducing a robust infection. In trans infection, bound virions remain infectious over days and it is proposed that they are not degraded, but protected in non-lysosomal acidic organelles within the DCs close to the cell membrane thus contributing to the viral infectious potential during DCs' migration from the periphery to the lymphoid tissues. On arrival at lymphoid tissues, intact virions recycle back to DCs' cell surface allowing virus transmission to CD4+ T-cells. Functionally, acts as a class I viral fusion protein. Under the current model, the protein has at least 3 conformational states: pre-fusion native state, pre-hairpin intermediate state, and post-fusion hairpin state. During fusion of viral and target intracellular membranes, the coiled coil regions (heptad repeats) assume a trimer-of-hairpins structure, positioning the fusion peptide in close proximity to the C-terminal region of the ectodomain. The formation of this structure appears to drive apposition and subsequent fusion of viral and target cell membranes. Complete fusion occurs in host cell endosomes and is dynamin-dependent, however some lipid transfer might occur at the plasma membrane. The virus undergoes clathrin-dependent internalization long before endosomal fusion, thus minimizing the surface exposure of conserved viral epitopes during fusion and reducing the efficacy of inhibitors targeting these epitopes. Membranes fusion leads to delivery of the nucleocapsid into the cytoplasm. The protein is Envelope glycoprotein gp160 of Homo sapiens (Human).